The following is a 219-amino-acid chain: Ribose-5-phosphate isomerase A (219 aa).

Substrate is bound by residues 28–31 (TGST), 81–84 (DGAD), and 94–97 (KGGG). Glu103 functions as the Proton acceptor in the catalytic mechanism. Lys121 provides a ligand contact to substrate.

Belongs to the ribose 5-phosphate isomerase family. Homodimer.

The enzyme catalyses aldehydo-D-ribose 5-phosphate = D-ribulose 5-phosphate. The protein operates within carbohydrate degradation; pentose phosphate pathway; D-ribose 5-phosphate from D-ribulose 5-phosphate (non-oxidative stage): step 1/1. Functionally, catalyzes the reversible conversion of ribose-5-phosphate to ribulose 5-phosphate. This is Ribose-5-phosphate isomerase A from Photorhabdus laumondii subsp. laumondii (strain DSM 15139 / CIP 105565 / TT01) (Photorhabdus luminescens subsp. laumondii).